Reading from the N-terminus, the 97-residue chain is Peptide YY (97 aa).

A signal peptide spans 1 to 28 (MVFVRRPWPALTTVLLALLVCLGALVDA). Ser-41 carries the phosphoserine modification. Tyr-64 is subject to Tyrosine amide. The tract at residues 65–97 (GKRDGPDTLLSKTFFPDGEDRPVRSRSEGPDLW) is disordered. The propeptide occupies 68–97 (DGPDTLLSKTFFPDGEDRPVRSRSEGPDLW). A compositionally biased stretch (basic and acidic residues) spans 82–97 (GEDRPVRSRSEGPDLW).

It belongs to the NPY family. Post-translationally, the peptide YY form is cleaved at Pro-30 by the prolyl endopeptidase FAP (seprase) activity (in vitro) to generate peptide YY(3-36).

The protein localises to the secreted. Its function is as follows. This gut peptide inhibits exocrine pancreatic secretion, has a vasoconstrictory action and inhibitis jejunal and colonic mobility. This chain is Peptide YY (PYY), found in Homo sapiens (Human).